Consider the following 261-residue polypeptide: Ribosomal RNA small subunit methyltransferase A (261 aa).

S-adenosyl-L-methionine contacts are provided by N15, I17, G42, E64, D90, and N109.

The protein belongs to the class I-like SAM-binding methyltransferase superfamily. rRNA adenine N(6)-methyltransferase family. RsmA subfamily.

It localises to the cytoplasm. The catalysed reaction is adenosine(1518)/adenosine(1519) in 16S rRNA + 4 S-adenosyl-L-methionine = N(6)-dimethyladenosine(1518)/N(6)-dimethyladenosine(1519) in 16S rRNA + 4 S-adenosyl-L-homocysteine + 4 H(+). Specifically dimethylates two adjacent adenosines (A1518 and A1519) in the loop of a conserved hairpin near the 3'-end of 16S rRNA in the 30S particle. May play a critical role in biogenesis of 30S subunits. In Wolbachia sp. subsp. Brugia malayi (strain TRS), this protein is Ribosomal RNA small subunit methyltransferase A.